The following is a 102-amino-acid chain: Large ribosomal subunit protein uL23 (102 aa).

Belongs to the universal ribosomal protein uL23 family. As to quaternary structure, part of the 50S ribosomal subunit. Contacts protein L29, and trigger factor when it is bound to the ribosome.

Its function is as follows. One of the early assembly proteins it binds 23S rRNA. One of the proteins that surrounds the polypeptide exit tunnel on the outside of the ribosome. Forms the main docking site for trigger factor binding to the ribosome. The polypeptide is Large ribosomal subunit protein uL23 (Chromobacterium violaceum (strain ATCC 12472 / DSM 30191 / JCM 1249 / CCUG 213 / NBRC 12614 / NCIMB 9131 / NCTC 9757 / MK)).